The following is a 294-amino-acid chain: Probable 2-(5''-triphosphoribosyl)-3'-dephosphocoenzyme-A synthase (294 aa).

It belongs to the CitG/MdcB family.

The catalysed reaction is 3'-dephospho-CoA + ATP = 2'-(5''-triphospho-alpha-D-ribosyl)-3'-dephospho-CoA + adenine. The protein is Probable 2-(5''-triphosphoribosyl)-3'-dephosphocoenzyme-A synthase of Streptococcus pyogenes serotype M28 (strain MGAS6180).